We begin with the raw amino-acid sequence, 251 residues long: uncharacterized protein (251 aa).

The first 25 residues, 1–25 (MSAGRLNKKSLGIVMLLSVGLLLAG), serve as a signal peptide directing secretion. C26 carries the N-palmitoyl cysteine lipid modification. Residue C26 is the site of S-diacylglycerol cysteine attachment. One can recognise a LysM domain in the interval 40 to 84 (SVYTVKRGDTLYRISRTTGTSVKELARLNGISPPYTIEVGQKLKL). A compositionally biased stretch (low complexity) spans 93 to 112 (TRKSTAKSTTKTASVTPSSA). A disordered region spans residues 93–115 (TRKSTAKSTTKTASVTPSSAVPK).

The protein belongs to the peptidase M23B family.

It is found in the cell inner membrane. This is an uncharacterized protein from Escherichia coli (strain K12).